Reading from the N-terminus, the 379-residue chain is Chaperone protein DnaJ (379 aa).

Positions 5–70 (DYYEVLGVSR…QKRAAYDQYG (66 aa)) constitute a J domain. Residues 134-212 (GVTKEIRIPT…CHGHGRVEKS (79 aa)) form a CR-type zinc finger. Residues Cys-147, Cys-150, Cys-164, Cys-167, Cys-186, Cys-189, Cys-200, and Cys-203 each coordinate Zn(2+). 4 CXXCXGXG motif repeats span residues 147–154 (CDVCHGSG), 164–171 (CPTCHGAG), 186–193 (CPHCHGRG), and 200–207 (CNKCHGHG).

It belongs to the DnaJ family. Homodimer. Zn(2+) is required as a cofactor.

The protein resides in the cytoplasm. In terms of biological role, participates actively in the response to hyperosmotic and heat shock by preventing the aggregation of stress-denatured proteins and by disaggregating proteins, also in an autonomous, DnaK-independent fashion. Unfolded proteins bind initially to DnaJ; upon interaction with the DnaJ-bound protein, DnaK hydrolyzes its bound ATP, resulting in the formation of a stable complex. GrpE releases ADP from DnaK; ATP binding to DnaK triggers the release of the substrate protein, thus completing the reaction cycle. Several rounds of ATP-dependent interactions between DnaJ, DnaK and GrpE are required for fully efficient folding. Also involved, together with DnaK and GrpE, in the DNA replication of plasmids through activation of initiation proteins. The sequence is that of Chaperone protein DnaJ from Yersinia pestis bv. Antiqua (strain Antiqua).